Reading from the N-terminus, the 821-residue chain is Calpain-3 (821 aa).

The segment at Ala7–Gly37 is disordered. The 344-residue stretch at Leu74 to Thr417 folds into the Calpain catalytic domain. Catalysis depends on residues Cys129, His334, and Asn358. A domain III region spans residues Ala418–Asn586. A linker region spans residues Thr587 to Glu649. Residues Ala609–Gln652 form a disordered region. Residues Glu622–Lys634 show a composition bias toward basic and acidic residues. Positions Gln635–Asp645 are enriched in low complexity. EF-hand domains follow at residues Glu649–Lys683, Phe692–Lys725, Asn722–His757, and Val787–Ala821. Positions Glu650–Ala821 are domain IV. Ca(2+)-binding residues include Ala662, Asp665, Glu667, Glu672, Asp705, Asp707, Ser709, Lys711, Glu716, Asp735, Asp737, Ser739, Thr741, Glu746, Asp800, Asp802, Asp804, and Ile806.

It belongs to the peptidase C2 family. In terms of assembly, homodimer; via EF-hand domain 4. Interacts with TTN/titin. Interacts with CMYA5; this interaction, which results in CMYA5 proteolysis, may protect CAPN3 from autolysis. Interacts with SIMC1. Interacts with UTP25; the interaction is required for CAPN3 translocation to the nucleolus. In terms of tissue distribution, isoform I is skeletal muscle specific.

The protein localises to the cytoplasm. Its subcellular location is the nucleus. It is found in the nucleolus. The enzyme catalyses Broad endopeptidase activity.. Activated by micromolar concentrations of calcium and inhibited by calpastatin. Its function is as follows. Calcium-regulated non-lysosomal thiol-protease. Proteolytically cleaves CTBP1 at 'His-409'. Mediates, with UTP25, the proteasome-independent degradation of p53/TP53. The protein is Calpain-3 of Homo sapiens (Human).